A 106-amino-acid polypeptide reads, in one-letter code: Putative double-stranded DNA mimic protein VP1949 (106 aa).

The protein belongs to the putative dsDNA mimic protein family.

Its function is as follows. May act as a double-stranded DNA (dsDNA) mimic. Probably regulates the activity of a dsDNA-binding protein. The chain is Putative double-stranded DNA mimic protein VP1949 from Vibrio parahaemolyticus serotype O3:K6 (strain RIMD 2210633).